The following is a 965-amino-acid chain: SKI family transcriptional corepressor 1 (965 aa).

Disordered regions lie at residues 45-72 (TQLGPGREGSSSPNSKQELQPYSGSSAL), 278-367 (RTFS…GGGA), 410-458 (DDPV…GGGA), 530-592 (SGAP…GSYV), 615-777 (AYGA…FAPE), and 796-843 (VCTP…EDGL). 3 stretches are compositionally biased toward gly residues: residues 283–312 (QGGGGGGANGGSGGQGKGGAGGGGGGGPGC), 356–367 (GPAGPGGPGGGA), and 418–442 (EPKGGPGTGSGGGGAGTGGGAGGPG). The segment covering 571 to 586 (LPPPLAPLPPPPPPPA) has biased composition (pro residues). A compositionally biased stretch (gly residues) spans 620 to 632 (PARGPGPGAGSGG). A compositionally biased stretch (polar residues) spans 641–650 (EGSSSYNSAS). 2 stretches are compositionally biased toward acidic residues: residues 654–663 (DTADEPEVDV) and 670–679 (DDEDAQEETE). The segment covering 800–823 (EAHEPDKEDNHSPADDLETRKSYP) has biased composition (basic and acidic residues). A compositionally biased stretch (polar residues) spans 824-835 (DQRSISQPSPAN). Positions 858–922 (ENLAREELQK…DTLCNELDQE (65 aa)) form a coiled coil.

This sequence belongs to the SKI family. Interacts with LBX1. Interacts with SMAD1, SMAD2 and SMAD3. As to expression, present specifically in cerebellar Purkinje cells (at protein level).

The protein resides in the nucleus. Functionally, acts as a transcriptional corepressor of LBX1. Inhibits BMP signaling. The protein is SKI family transcriptional corepressor 1 (SKOR1) of Homo sapiens (Human).